Here is a 510-residue protein sequence, read N- to C-terminus: MDEKTKKAEEMALSLTRAVAGGDEQVAMKCAIWLAEQRVPLSVQLKPEVSPTQDIRLWVSVEDAQMHTVTIWLTVRPDMTVASLKDMVFLDYGFPPVLQQWVIGQRLARDQETLHSHGVRQNGDSAYLYLLSARNTSLNPQELQRERQLRMLEDLGFKDLTLQPRGPLEPGPPKPGVPQEPGRGQPDAVPEPPPVGWQCPGCTFINKPTRPGCEMCCRARPEAYQVPASYQPDEEERARLAGEEEALRQYQQRKQQQQEGNYLQHVQLDQRSLVLNTEPAECPVCYSVLAPGEAVVLRECLHTFCRECLQGTIRNSQEAEVSCPFIDNTYSCSGKLLEREIKALLTPEDYQRFLDLGISIAENRSAFSYHCKTPDCKGWCFFEDDVNEFTCPVCFHVNCLLCKAIHEQMNCKEYQEDLALRAQNDVAARQTTEMLKVMLQQGEAMRCPQCQIVVQKKDGCDWIRCTVCHTEICWVTKGPRWGPGGPGDTSGGCRCRVNGIPCHPSCQNCH.

Methionine 1 carries the post-translational modification N-acetylmethionine. Residues 1–220 form an interaction with IRF3 region; the sequence is MDEKTKKAEE…PGCEMCCRAR (220 aa). Residues 1 to 270 form an interaction with TAB2 region; the sequence is MDEKTKKAEE…NYLQHVQLDQ (270 aa). Serine 50 is modified (phosphoserine). A Ubiquitin-like domain is found at 55-119; sequence IRLWVSVEDA…DQETLHSHGV (65 aa). The tract at residues 69-131 is interaction with RNF31; that stretch reads VTIWLTVRPD…NGDSAYLYLL (63 aa). The tract at residues 160-192 is disordered; it reads LTLQPRGPLEPGPPKPGVPQEPGRGQPDAVPEP. The span at 167 to 178 shows a compositional bias: pro residues; that stretch reads PLEPGPPKPGVP. The RanBP2-type zinc-finger motif lies at 193-222; that stretch reads PPVGWQCPGCTFINKPTRPGCEMCCRARPE. Residues 233–261 adopt a coiled-coil conformation; it reads DEEERARLAGEEEALRQYQQRKQQQQEGN. Residues 278-506 form a TRIAD supradomain region; that stretch reads EPAECPVCYS…VNGIPCHPSC (229 aa). Positions 282, 285, 300, 302, 305, 308, and 323 each coordinate Zn(2+). The segment at 282–332 adopts an RING-type 1 zinc-finger fold; sequence CPVCYSVLAPGEAVVLRECLHTFCRECLQGTIRNSQEAEVSCPFIDNTYSC. Tyrosine 330 carries the post-translational modification Phosphotyrosine. Residues cysteine 332, cysteine 371, cysteine 376, cysteine 391, cysteine 394, cysteine 399, cysteine 402, histidine 406, cysteine 411, cysteine 447, and cysteine 450 each coordinate Zn(2+). The segment at 351–411 adopts an IBR-type zinc-finger fold; sequence QRFLDLGISI…CKAIHEQMNC (61 aa). An RING-type 2; atypical zinc finger spans residues 447–476; the sequence is CPQCQIVVQKKDGCDWIRCTVCHTEICWVT. Residue cysteine 460 is part of the active site. Residues cysteine 465 and cysteine 468 each contribute to the Zn(2+) site.

Belongs to the RBR family. As to quaternary structure, component of the LUBAC complex (linear ubiquitin chain assembly complex) which consists of SHARPIN, RBCK1 and RNF31. LUBAC has a MW of approximately 600 kDa suggesting a heteromultimeric assembly of its subunits. Interacts with beta-I-type (PRKCB1) and zeta-type protein kinase C (PRKCZ). Interacts with UBE2L3. Interacts with PRKCH. Associates with the TNF-R1 signaling complex (TNF-RSC) in a stimulation-dependent manner. Interacts with EYA1, TAB2, TAB3, MAP3K7 TRAF6 and RIPK1. Interacts with IRF3. In terms of assembly, interacts with IREB2 only in iron-rich conditions. (Microbial infection) Interacts with hepatitis B virus/HBV protein HBx; this interaction is required to activate transcription of the viral genome. Auto-ubiquitinated. Auto-ubiquitination leads to degradation by the proteasome. Post-translationally, phosphorylated. In vitro, phosphorylation inhibits auto-ubiquitination activity. In terms of processing, (Microbial infection) Ubiquitinated by S.flexneri E3 ubiquitin-protein ligases IpaH1.4 and IpaH2.5, leading to its degradation by the proteasome, thereby preventing formation of the bacterial ubiquitin coat and activation of innate immunity.

It carries out the reaction [E2 ubiquitin-conjugating enzyme]-S-ubiquitinyl-L-cysteine + [acceptor protein]-L-lysine = [E2 ubiquitin-conjugating enzyme]-L-cysteine + [acceptor protein]-N(6)-ubiquitinyl-L-lysine.. It participates in protein modification; protein ubiquitination. E3 ubiquitin-protein ligase, which accepts ubiquitin from specific E2 ubiquitin-conjugating enzymes, such as UBE2L3/UBCM4, and then transfers it to substrates. Functions as an E3 ligase for oxidized IREB2 and both heme and oxygen are necessary for IREB2 ubiquitination. Promotes ubiquitination of TAB2 and IRF3 and their degradation by the proteasome. Component of the LUBAC complex which conjugates linear ('Met-1'-linked) polyubiquitin chains to substrates and plays a key role in NF-kappa-B activation and regulation of inflammation. LUBAC conjugates linear polyubiquitin to IKBKG and RIPK1 and is involved in activation of the canonical NF-kappa-B and the JNK signaling pathways. Linear ubiquitination mediated by the LUBAC complex interferes with TNF-induced cell death and thereby prevents inflammation. LUBAC is recruited to the TNF-R1 signaling complex (TNF-RSC) following polyubiquitination of TNF-RSC components by BIRC2 and/or BIRC3 and to conjugate linear polyubiquitin to IKBKG and possibly other components contributing to the stability of the complex. The LUBAC complex is also involved in innate immunity by conjugating linear polyubiquitin chains at the surface of bacteria invading the cytosol to form the ubiquitin coat surrounding bacteria. LUBAC is not able to initiate formation of the bacterial ubiquitin coat, and can only promote formation of linear polyubiquitins on pre-existing ubiquitin. The bacterial ubiquitin coat acts as an 'eat-me' signal for xenophagy and promotes NF-kappa-B activation. Together with OTULIN, the LUBAC complex regulates the canonical Wnt signaling during angiogenesis. Binds polyubiquitin of different linkage types. This Homo sapiens (Human) protein is RanBP-type and C3HC4-type zinc finger-containing protein 1 (RBCK1).